The chain runs to 153 residues: SsrA-binding protein (153 aa).

The span at 132 to 142 (ALKRKEAEREA) shows a compositional bias: basic and acidic residues. The tract at residues 132-153 (ALKRKEAEREAQSAMKRYAKGY) is disordered.

The protein belongs to the SmpB family.

Its subcellular location is the cytoplasm. Functionally, required for rescue of stalled ribosomes mediated by trans-translation. Binds to transfer-messenger RNA (tmRNA), required for stable association of tmRNA with ribosomes. tmRNA and SmpB together mimic tRNA shape, replacing the anticodon stem-loop with SmpB. tmRNA is encoded by the ssrA gene; the 2 termini fold to resemble tRNA(Ala) and it encodes a 'tag peptide', a short internal open reading frame. During trans-translation Ala-aminoacylated tmRNA acts like a tRNA, entering the A-site of stalled ribosomes, displacing the stalled mRNA. The ribosome then switches to translate the ORF on the tmRNA; the nascent peptide is terminated with the 'tag peptide' encoded by the tmRNA and targeted for degradation. The ribosome is freed to recommence translation, which seems to be the essential function of trans-translation. The protein is SsrA-binding protein of Campylobacter hominis (strain ATCC BAA-381 / DSM 21671 / CCUG 45161 / LMG 19568 / NCTC 13146 / CH001A).